Here is an 88-residue protein sequence, read N- to C-terminus: Large ribosomal subunit protein eL20 (88 aa).

Belongs to the eukaryotic ribosomal protein eL20 family. In terms of assembly, part of the 50S ribosomal subunit. Binds 23S rRNA.

The chain is Large ribosomal subunit protein eL20 from Aeropyrum pernix (strain ATCC 700893 / DSM 11879 / JCM 9820 / NBRC 100138 / K1).